A 509-amino-acid chain; its full sequence is UDP-N-acetylmuramoylalanine--D-glutamate ligase (509 aa).

116 to 122 (GTNGKST) contributes to the ATP binding site.

The protein belongs to the MurCDEF family.

Its subcellular location is the cytoplasm. It carries out the reaction UDP-N-acetyl-alpha-D-muramoyl-L-alanine + D-glutamate + ATP = UDP-N-acetyl-alpha-D-muramoyl-L-alanyl-D-glutamate + ADP + phosphate + H(+). It participates in cell wall biogenesis; peptidoglycan biosynthesis. Functionally, cell wall formation. Catalyzes the addition of glutamate to the nucleotide precursor UDP-N-acetylmuramoyl-L-alanine (UMA). The chain is UDP-N-acetylmuramoylalanine--D-glutamate ligase from Wolbachia pipientis wMel.